Reading from the N-terminus, the 647-residue chain is DNA mismatch repair protein MutL (647 aa).

Disordered stretches follow at residues glutamate 356 to serine 391 and proline 407 to proline 428. A compositionally biased stretch (polar residues) spans leucine 413 to serine 423.

Belongs to the DNA mismatch repair MutL/HexB family.

Its function is as follows. This protein is involved in the repair of mismatches in DNA. It is required for dam-dependent methyl-directed DNA mismatch repair. May act as a 'molecular matchmaker', a protein that promotes the formation of a stable complex between two or more DNA-binding proteins in an ATP-dependent manner without itself being part of a final effector complex. This chain is DNA mismatch repair protein MutL, found in Citrifermentans bemidjiense (strain ATCC BAA-1014 / DSM 16622 / JCM 12645 / Bem) (Geobacter bemidjiensis).